The sequence spans 430 residues: Phosphomethylpyrimidine synthase (430 aa).

Residues Asn-67, Met-96, Tyr-125, His-161, 183-185, 224-227, and Glu-263 each bind substrate; these read SRG and DALR. Zn(2+) is bound at residue His-267. Tyr-290 contributes to the substrate binding site. His-331 lines the Zn(2+) pocket. [4Fe-4S] cluster contacts are provided by Cys-406, Cys-409, and Cys-413.

It belongs to the ThiC family. Homodimer. [4Fe-4S] cluster serves as cofactor.

The catalysed reaction is 5-amino-1-(5-phospho-beta-D-ribosyl)imidazole + S-adenosyl-L-methionine = 4-amino-2-methyl-5-(phosphooxymethyl)pyrimidine + CO + 5'-deoxyadenosine + formate + L-methionine + 3 H(+). Its pathway is cofactor biosynthesis; thiamine diphosphate biosynthesis. Catalyzes the synthesis of the hydroxymethylpyrimidine phosphate (HMP-P) moiety of thiamine from aminoimidazole ribotide (AIR) in a radical S-adenosyl-L-methionine (SAM)-dependent reaction. The polypeptide is Phosphomethylpyrimidine synthase (Campylobacter jejuni subsp. doylei (strain ATCC BAA-1458 / RM4099 / 269.97)).